Here is a 248-residue protein sequence, read N- to C-terminus: Phycocyanobilin:ferredoxin oxidoreductase (248 aa).

It belongs to the HY2 family.

The enzyme catalyses (2R,3Z)-phycocyanobilin + 4 oxidized [2Fe-2S]-[ferredoxin] = biliverdin IXalpha + 4 reduced [2Fe-2S]-[ferredoxin] + 4 H(+). Functionally, catalyzes the four-electron reduction of biliverdin IX-alpha (2-electron reduction at both the A and D rings); the reaction proceeds via an isolatable 2-electron intermediate, 181,182-dihydrobiliverdin. This Synechococcus sp. (strain ATCC 27144 / PCC 6301 / SAUG 1402/1) (Anacystis nidulans) protein is Phycocyanobilin:ferredoxin oxidoreductase.